The primary structure comprises 409 residues: Palmitoyltransferase ZDHHC23 (409 aa).

Residues 1–87 lie on the Cytoplasmic side of the membrane; sequence MTQKGSMKPV…RIPWLRGAKK (87 aa). Residues 88–106 form a helical membrane-spanning segment; sequence VNISIIPPLVLLPVFLHVA. The Lumenal segment spans residues 107 to 109; sequence SWH. Residues 110–132 form a helical membrane-spanning segment; sequence FLLGVVVLTSLPVLALWYYYLTH. Residues 133–136 lie on the Cytoplasmic side of the membrane; that stretch reads RRKE. Residues 137–157 form a helical membrane-spanning segment; it reads QTLFFLSLGLFSLGYMYYVFL. Topologically, residues 158–165 are lumenal; sequence QEVVPKGR. Residues 166–186 form a helical membrane-spanning segment; the sequence is VGPVQLAVLTCGLFLILLALH. The Cytoplasmic portion of the chain corresponds to 187–302; sequence RAKKNPGYLS…NSCVGESNHQ (116 aa). The disordered stretch occupies residues 215-255; that stretch reads RKGQEKTKGFPGADMSGSLNNRTTKDDPKGSSKMPAGSPTK. Positions 259–309 constitute a DHHC domain; it reads DWCAKCQLVRPARAWHCRICGICVRRMDHHCVWINSCVGESNHQAFILALL. Cys-289 (S-palmitoyl cysteine intermediate) is an active-site residue. Residues 303–323 traverse the membrane as a helical segment; the sequence is AFILALLIFLLTSVYGITLTL. Residues 324 to 331 lie on the Lumenal side of the membrane; sequence DTICRDRS. The helical transmembrane segment at 332–352 threads the bilayer; the sequence is VFTALFYCPGVYANYSSALSF. Position 353 (Thr-353) is a topological domain, cytoplasmic. Residues 354 to 374 form a helical membrane-spanning segment; sequence CVWYSVIITAGMAYIFLIQLI. The Lumenal portion of the chain corresponds to 375-409; that stretch reads NISYNVTEREVQQALRQKTGRRLLCGLIVDTGLLG.

The protein belongs to the DHHC palmitoyltransferase family. In terms of assembly, interacts with NOS1.

It localises to the golgi apparatus membrane. It is found in the golgi apparatus. The protein resides in the trans-Golgi network membrane. It catalyses the reaction L-cysteinyl-[protein] + hexadecanoyl-CoA = S-hexadecanoyl-L-cysteinyl-[protein] + CoA. Functionally, palmitoyltransferase that could catalyze the addition of palmitate onto various protein substrates and be involved in a variety of cellular processes. Palmitoyltransferase that mediates palmitoylation of KCNMA1, regulating localization of KCNMA1 to the plasma membrane. May be involved in NOS1 regulation and targeting to the synaptic membrane. The chain is Palmitoyltransferase ZDHHC23 from Homo sapiens (Human).